A 333-amino-acid chain; its full sequence is tRNA N6-adenosine threonylcarbamoyltransferase (333 aa).

Fe cation contacts are provided by His118 and His122. Substrate contacts are provided by residues 140-144 (VVSGG), Asp173, Gly186, and Asn274. A Fe cation-binding site is contributed by Asp298.

The protein belongs to the KAE1 / TsaD family. Fe(2+) is required as a cofactor.

Its subcellular location is the cytoplasm. The catalysed reaction is L-threonylcarbamoyladenylate + adenosine(37) in tRNA = N(6)-L-threonylcarbamoyladenosine(37) in tRNA + AMP + H(+). In terms of biological role, required for the formation of a threonylcarbamoyl group on adenosine at position 37 (t(6)A37) in tRNAs that read codons beginning with adenine. Is involved in the transfer of the threonylcarbamoyl moiety of threonylcarbamoyl-AMP (TC-AMP) to the N6 group of A37, together with TsaE and TsaB. TsaD likely plays a direct catalytic role in this reaction. The sequence is that of tRNA N6-adenosine threonylcarbamoyltransferase from Deinococcus geothermalis (strain DSM 11300 / CIP 105573 / AG-3a).